Consider the following 426-residue polypeptide: Histidine--tRNA ligase (426 aa).

Belongs to the class-II aminoacyl-tRNA synthetase family.

The protein localises to the cytoplasm. It catalyses the reaction tRNA(His) + L-histidine + ATP = L-histidyl-tRNA(His) + AMP + diphosphate + H(+). This is Histidine--tRNA ligase from Saccharolobus islandicus (strain M.16.27) (Sulfolobus islandicus).